Here is a 181-residue protein sequence, read N- to C-terminus: Large ribosomal subunit protein uL5c (181 aa).

Belongs to the universal ribosomal protein uL5 family. In terms of assembly, part of the 50S ribosomal subunit; contacts the 5S rRNA.

It is found in the plastid. The protein resides in the cyanelle. Binds 5S rRNA, forms part of the central protuberance of the 50S subunit. The protein is Large ribosomal subunit protein uL5c (rpl5) of Cyanophora paradoxa.